Consider the following 114-residue polypeptide: V-type proton ATPase subunit G (114 aa).

Ser-2 is subject to N-acetylserine.

It belongs to the V-ATPase G subunit family. In terms of assembly, V-ATPase is a heteromultimeric enzyme composed of a peripheral catalytic V1 complex (components A to H) attached to an integral membrane V0 proton pore complex (components: a, c, c', c'', d, e, f and VOA1).

The protein localises to the vacuole membrane. In terms of biological role, subunit of the V1 complex of vacuolar(H+)-ATPase (V-ATPase), a multisubunit enzyme composed of a peripheral complex (V1) that hydrolyzes ATP and a membrane integral complex (V0) that translocates protons. V-ATPase is responsible for acidifying and maintaining the pH of intracellular compartments. The polypeptide is V-type proton ATPase subunit G (Saccharomyces cerevisiae (strain ATCC 204508 / S288c) (Baker's yeast)).